We begin with the raw amino-acid sequence, 32 residues long: Potassium channel toxin alpha-KTx 10.2 (32 aa).

Intrachain disulfides connect Cys3–Cys22, Cys8–Cys12, and Cys27–Cys29. Tyr32 is subject to Tyrosine amide.

The protein belongs to the short scorpion toxin superfamily. Potassium channel inhibitor family. Alpha-KTx 10 subfamily. As to expression, expressed by the venom gland.

Its subcellular location is the secreted. Its function is as follows. Blocks Shaker B potassium-channels (Kv1.1/KCNA1 sub-family). The polypeptide is Potassium channel toxin alpha-KTx 10.2 (Centruroides noxius (Mexican scorpion)).